Reading from the N-terminus, the 598-residue chain is MFS transporter L2 (598 aa).

3 consecutive transmembrane segments (helical) span residues 83 to 103, 122 to 142, and 150 to 170; these read IAAFLSLCIIVLMAALDATSI, FWAGTSFLLTSTIFQPVLGSF, and SLIYISLVFFLAGSIIPAVAN. N-linked (GlcNAc...) asparagine glycosylation occurs at N171. Helical transmembrane passes span 183–203, 212–232, 239–259, 277–297, and 309–329; these read GVGGGGIIALTEMVVVDTVPL, FFGMMWSFGTVAGPLIGGAFA, WVFWINLPFLGIGTVLITVFL, WIGMVLFLGSTTGFLIPITWG, and LVPLIVSAAGIVAFIVHQEKF. An N-linked (GlcNAc...) asparagine glycan is attached at N342. The next 6 membrane-spanning stretches (helical) occupy residues 346-366, 383-403, 411-431, 439-459, 476-496, and 550-570; these read ALLYLTTVIHGIILWAILYFM, VALFPWTFTVAPGAVATGIAI, WANWAGWFLATLGSGLLILLK, WIFLNLVGGIGTGILFPAMAL, MFSFFRAFGQTLGVAIGGVVF, and YIWIVATVLAGVSLVATLFID.

This sequence belongs to the major facilitator superfamily.

Its subcellular location is the membrane. Its function is as follows. MFS transporter; part of the gene cluster that mediates the biosynthesis of squalestatin S1 (SQS1, also known as zaragozic acid A), a lead compound for the treatment of hyper-cholesterolemia by targeting squalene synthase (SS). The polypeptide is MFS transporter L2 (Phoma sp. (strain ATCC 20986 / MF5453)).